Here is a 312-residue protein sequence, read N- to C-terminus: Apolipoprotein E (312 aa).

The first 18 residues, 1–18 (MKALWAVLLVTLLAGCLA), serve as a signal peptide directing secretion. Repeat copies occupy residues 72–93 (VLME…EQLG), 94–115 (PVAE…ARLG), 116–137 (ADME…TMLG), 138–159 (QSTE…KRLM), 160–181 (RDAE…EGAE), 182–203 (RGVS…QRTA), 204–225 (NLGA…DRIR), and 226–247 (GRLE…EHME). The tract at residues 72-247 (VLMEDTMTEV…RLEEVREHME (176 aa)) is 8 X 22 AA approximate tandem repeats. The residue at position 135 (methionine 135) is a Methionine sulfoxide. Serine 139 carries the phosphoserine modification. An LDL and other lipoprotein receptors binding region spans residues 150–160 (HLRKMRKRLMR). 154–157 (MRKR) serves as a coordination point for heparin. Positions 202-282 (TANLGAGAAQ…GWFEPIVEDM (81 aa)) are lipid-binding and lipoprotein association. 221–228 (GDRIRGRL) serves as a coordination point for heparin. The segment at 258 to 312 (QQIRLQAEIFQARLKGWFEPIVEDMHRQWANLMEKIQASVATNPIISTPMPQENQ) is homooligomerization. The interval 270–282 (RLKGWFEPIVEDM) is specificity for association with VLDL.

It belongs to the apolipoprotein A1/A4/E family. Homotetramer. May interact with ABCA1; functionally associated with ABCA1 in the biogenesis of HDLs. May interact with APP/A4 amyloid-beta peptide; the interaction is extremely stable in vitro but its physiological significance is unclear. May interact with MAPT. May interact with MAP2. In the cerebrospinal fluid, interacts with secreted SORL1. Interacts with PMEL; this allows the loading of PMEL luminal fragment on ILVs to induce fibril nucleation. APOE exists as multiple glycosylated and sialylated glycoforms within cells and in plasma. The extent of glycosylation and sialylation are tissue and context specific. Post-translationally, glycated in plasma VLDL. In terms of processing, phosphorylated by FAM20C in the extracellular medium.

The protein localises to the secreted. The protein resides in the extracellular space. Its subcellular location is the extracellular matrix. It is found in the extracellular vesicle. It localises to the endosome. The protein localises to the multivesicular body. APOE is an apolipoprotein, a protein associating with lipid particles, that mainly functions in lipoprotein-mediated lipid transport between organs via the plasma and interstitial fluids. APOE is a core component of plasma lipoproteins and is involved in their production, conversion and clearance. Apolipoproteins are amphipathic molecules that interact both with lipids of the lipoprotein particle core and the aqueous environment of the plasma. As such, APOE associates with chylomicrons, chylomicron remnants, very low density lipoproteins (VLDL) and intermediate density lipoproteins (IDL) but shows a preferential binding to high-density lipoproteins (HDL). It also binds a wide range of cellular receptors including the LDL receptor/LDLR, the LDL receptor-related proteins LRP1, LRP2 and LRP8 and the very low-density lipoprotein receptor/VLDLR that mediate the cellular uptake of the APOE-containing lipoprotein particles. Finally, APOE also has a heparin-binding activity and binds heparan-sulfate proteoglycans on the surface of cells, a property that supports the capture and the receptor-mediated uptake of APOE-containing lipoproteins by cells. A main function of APOE is to mediate lipoprotein clearance through the uptake of chylomicrons, VLDLs, and HDLs by hepatocytes. APOE is also involved in the biosynthesis by the liver of VLDLs as well as their uptake by peripheral tissues ensuring the delivery of triglycerides and energy storage in muscle, heart and adipose tissues. By participating in the lipoprotein-mediated distribution of lipids among tissues, APOE plays a critical role in plasma and tissues lipid homeostasis. APOE is also involved in two steps of reverse cholesterol transport, the HDLs-mediated transport of cholesterol from peripheral tissues to the liver, and thereby plays an important role in cholesterol homeostasis. First, it is functionally associated with ABCA1 in the biogenesis of HDLs in tissues. Second, it is enriched in circulating HDLs and mediates their uptake by hepatocytes. APOE also plays an important role in lipid transport in the central nervous system, regulating neuron survival and sprouting. The protein is Apolipoprotein E (Apoe) of Mus pahari (Gairdner's shrew-mouse).